The primary structure comprises 210 residues: 3-hexulose-6-phosphate synthase (210 aa).

Belongs to the HPS/KGPDC family. HPS subfamily.

It catalyses the reaction D-ribulose 5-phosphate + formaldehyde = D-arabino-hex-3-ulose 6-phosphate. Its pathway is one-carbon metabolism; formaldehyde assimilation via RuMP pathway; D-fructose 6-phosphate from D-ribulose 5-phosphate and formaldehyde: step 1/2. In terms of biological role, catalyzes the condensation of ribulose 5-phosphate with formaldehyde to form 3-hexulose 6-phosphate. The sequence is that of 3-hexulose-6-phosphate synthase from Staphylococcus aureus (strain NCTC 8325 / PS 47).